The primary structure comprises 498 residues: MGILSYLCYSLFYLSIFFIIRLLFQSRKFKNLPPGPTSLPIIGNLHHLKRPLNRTFKALTEKYGNVISLWFGSRLVVVVSSLSEFQECFTKNDVVLANRPRFLSGKYIFYNYTTLGSTSYGEHWRNLRRITSLDVLSNHRINNFAPIRRDETQRLIKKLAEDSSTKFAEVELTFRFFDMTFNNIMRMISGKRYYGDDCDISEVQEASQFRDMVSELLQLSGANNKTDFMPLLKFLDFENLEKRVKRIGEKNDVFLSGLLQEQRSKKERTNTMIDHLLNMQESQPEYYTDTIIKGLCLAMLLAGTDSSAVTLEWTMSNILNYPEVLKKVRDEVDTHVGQDRLVDESDLPKLTYLRNVIYETLRLYTPAPLLLPHSTADECIMGGYKVPRDTIVLINAWAIHRDPETWSEATTFKPERFDKKGELEKMIAFGMGRRACPGEGLALRAISMTLALLVQCFDWKRINDEKIDMSERDGFTMTKLLPLKAMCKTRPVVNKVFK.

Residues 3–23 traverse the membrane as a helical segment; the sequence is ILSYLCYSLFYLSIFFIIRLL. Residue C436 participates in heme binding.

It belongs to the cytochrome P450 family. Heme serves as cofactor. In terms of tissue distribution, expressed constitutively in roots, but present at very low levels in uninfected stems and leaves.

It localises to the endoplasmic reticulum membrane. The enzyme catalyses formononetin + reduced [NADPH--hemoprotein reductase] + O2 = 2'-hydroxyformononetin + oxidized [NADPH--hemoprotein reductase] + H2O + H(+). In terms of biological role, involved in the biosynthesis of the pterocarpin phytoalexins. Acts on isoflavones with a 4'-methoxy group on the B-ring, such as formononetin and biochanin A, and on pseudobaptigenin. Has a low activity with daidzein and genistein and no activity with the 7-O-methylated isoflavonoids isoformononetin and prunetin. This Medicago truncatula (Barrel medic) protein is Isoflavone 2'-hydroxylase.